The primary structure comprises 629 residues: Pescadillo homolog (629 aa).

Positions 321–414 (RLRTLFKGLK…QLLPTNKYFI (94 aa)) constitute a BRCT domain. Disordered regions lie at residues 439-470 (KALL…ETVD), 488-568 (EYKK…MVKP), and 598-629 (IEAS…KLGK). A phosphoserine mark is found at Ser-453 and Ser-457. 2 stretches are compositionally biased toward acidic residues: residues 454-470 (DEDS…ETVD) and 498-523 (VNED…EELD). Positions 524 to 535 (EKSKRLQEEKQK) are enriched in basic and acidic residues. The span at 542–551 (KVHKVNKRQV) shows a compositional bias: basic residues. Basic and acidic residues-rich tracts occupy residues 552–561 (HKAEVDEHRL) and 598–617 (IEAS…RKEA). Residues 584-627 (KEKEEWLLRKKRRTIEASEKEARKTAKREARKEAAAAAAKASKL) adopt a coiled-coil conformation. Residues 618-629 (AAAAAKASKLGK) are compositionally biased toward low complexity.

This sequence belongs to the pescadillo family.

Its subcellular location is the nucleus. The protein localises to the nucleolus. The protein resides in the nucleoplasm. Required for maturation of ribosomal RNAs and formation of the large ribosomal subunit. This is Pescadillo homolog from Drosophila erecta (Fruit fly).